We begin with the raw amino-acid sequence, 338 residues long: ABC transporter I family member 6, chloroplastic (338 aa).

Residues 1–66 (MAGVNLQLRH…RTTRRSVIVS (66 aa)) constitute a chloroplast transit peptide. The ABC transporter domain maps to 92–338 (LEVRDLRAVI…EKEGYKAISG (247 aa)). Residue 126–133 (GKNGSGKS) participates in ATP binding.

It belongs to the ABC transporter superfamily. ABCI family. Interacts with NAP6. Present in all organs, with higher levels in aerial parts.

It localises to the plastid. The protein resides in the chloroplast. Its function is as follows. Essential protein. Required during embryo development, especially at early stages. Involved in chloroplast differentiation. The sequence is that of ABC transporter I family member 6, chloroplastic (ABCI6) from Arabidopsis thaliana (Mouse-ear cress).